Consider the following 475-residue polypeptide: Ribulose bisphosphate carboxylase large chain (475 aa).

Residues 1–2 constitute a propeptide that is removed on maturation; the sequence is MS. N-acetylproline is present on Pro-3. Lys-14 is modified (N6,N6,N6-trimethyllysine). Positions 123 and 173 each coordinate substrate. Lys-175 serves as the catalytic Proton acceptor. Lys-177 is a binding site for substrate. 3 residues coordinate Mg(2+): Lys-201, Asp-203, and Glu-204. At Lys-201 the chain carries N6-carboxylysine. His-294 (proton acceptor) is an active-site residue. The substrate site is built by Arg-295, His-327, and Ser-379.

It belongs to the RuBisCO large chain family. Type I subfamily. Heterohexadecamer of 8 large chains and 8 small chains; disulfide-linked. The disulfide link is formed within the large subunit homodimers. Mg(2+) serves as cofactor. Post-translationally, the disulfide bond which can form in the large chain dimeric partners within the hexadecamer appears to be associated with oxidative stress and protein turnover.

Its subcellular location is the plastid. The protein resides in the chloroplast. The catalysed reaction is 2 (2R)-3-phosphoglycerate + 2 H(+) = D-ribulose 1,5-bisphosphate + CO2 + H2O. The enzyme catalyses D-ribulose 1,5-bisphosphate + O2 = 2-phosphoglycolate + (2R)-3-phosphoglycerate + 2 H(+). RuBisCO catalyzes two reactions: the carboxylation of D-ribulose 1,5-bisphosphate, the primary event in carbon dioxide fixation, as well as the oxidative fragmentation of the pentose substrate in the photorespiration process. Both reactions occur simultaneously and in competition at the same active site. The protein is Ribulose bisphosphate carboxylase large chain of Pseudolarix amabilis (Golden larch).